We begin with the raw amino-acid sequence, 806 residues long: Glycerol-3-phosphate acyltransferase (806 aa).

Positions 305 to 310 (CHRSHM) match the HXXXXD motif motif.

The protein belongs to the GPAT/DAPAT family.

The protein localises to the cell inner membrane. The catalysed reaction is sn-glycerol 3-phosphate + an acyl-CoA = a 1-acyl-sn-glycero-3-phosphate + CoA. It participates in phospholipid metabolism; CDP-diacylglycerol biosynthesis; CDP-diacylglycerol from sn-glycerol 3-phosphate: step 1/3. In Enterobacter sp. (strain 638), this protein is Glycerol-3-phosphate acyltransferase.